We begin with the raw amino-acid sequence, 409 residues long: Tryptophan synthase beta chain (409 aa).

Position 104 is an N6-(pyridoxal phosphate)lysine (lysine 104).

Belongs to the TrpB family. In terms of assembly, tetramer of two alpha and two beta chains. Pyridoxal 5'-phosphate is required as a cofactor.

It catalyses the reaction (1S,2R)-1-C-(indol-3-yl)glycerol 3-phosphate + L-serine = D-glyceraldehyde 3-phosphate + L-tryptophan + H2O. It participates in amino-acid biosynthesis; L-tryptophan biosynthesis; L-tryptophan from chorismate: step 5/5. The beta subunit is responsible for the synthesis of L-tryptophan from indole and L-serine. This is Tryptophan synthase beta chain from Trichodesmium erythraeum (strain IMS101).